Consider the following 242-residue polypeptide: Putative serine/threonine-protein kinase (242 aa).

A Protein kinase domain is found at 49–242 (FSSKNKVGEG…KSDVYSFGVL (194 aa)). ATP contacts are provided by residues 55–63 (VGEGGCGAV) and Lys77. Asp177 functions as the Proton acceptor in the catalytic mechanism.

This sequence belongs to the protein kinase superfamily. Ser/Thr protein kinase family.

It catalyses the reaction L-seryl-[protein] + ATP = O-phospho-L-seryl-[protein] + ADP + H(+). The enzyme catalyses L-threonyl-[protein] + ATP = O-phospho-L-threonyl-[protein] + ADP + H(+). This Helianthus annuus (Common sunflower) protein is Putative serine/threonine-protein kinase.